A 117-amino-acid polypeptide reads, in one-letter code: Flagellar transcriptional regulator FlhD (117 aa).

It belongs to the FlhD family. As to quaternary structure, homodimer; disulfide-linked. Forms a heterohexamer composed of two FlhC and four FlhD subunits. Each FlhC binds a FlhD dimer, forming a heterotrimer, and a hexamer assembles by dimerization of two heterotrimers.

The protein localises to the cytoplasm. Functionally, functions in complex with FlhC as a master transcriptional regulator that regulates transcription of several flagellar and non-flagellar operons by binding to their promoter region. Activates expression of class 2 flagellar genes, including fliA, which is a flagellum-specific sigma factor that turns on the class 3 genes. Also regulates genes whose products function in a variety of physiological pathways. This chain is Flagellar transcriptional regulator FlhD, found in Erwinia amylovora (strain CFBP1430).